The following is an 89-amino-acid chain: RNA-binding protein Hfq (89 aa).

One can recognise a Sm domain in the interval 9-68 (EPFLNALRKEKVPVSIYLVNGIKLQGQIESFDQFVILLRNNVNQMVYKHAISTVVPARNV). The disordered stretch occupies residues 70–89 (TAPPVPTETHAQSSEEFGNI). The span at 78–89 (THAQSSEEFGNI) shows a compositional bias: polar residues.

This sequence belongs to the Hfq family. Homohexamer.

Its function is as follows. RNA chaperone that binds small regulatory RNA (sRNAs) and mRNAs to facilitate mRNA translational regulation in response to envelope stress, environmental stress and changes in metabolite concentrations. Also binds with high specificity to tRNAs. This is RNA-binding protein Hfq from Alkalilimnicola ehrlichii (strain ATCC BAA-1101 / DSM 17681 / MLHE-1).